Here is a 953-residue protein sequence, read N- to C-terminus: Valine--tRNA ligase (953 aa).

Residues 42–52 carry the 'HIGH' region motif; it reads PNVTGSLHMGH. The 'KMSKS' region signature appears at 554–558; the sequence is KMSKS. Lysine 557 is an ATP binding site. Positions 884–952 form a coiled coil; it reads LIDKDAELDR…LEQQKATIAA (69 aa).

The protein belongs to the class-I aminoacyl-tRNA synthetase family. ValS type 1 subfamily. In terms of assembly, monomer.

Its subcellular location is the cytoplasm. It catalyses the reaction tRNA(Val) + L-valine + ATP = L-valyl-tRNA(Val) + AMP + diphosphate. Catalyzes the attachment of valine to tRNA(Val). As ValRS can inadvertently accommodate and process structurally similar amino acids such as threonine, to avoid such errors, it has a 'posttransfer' editing activity that hydrolyzes mischarged Thr-tRNA(Val) in a tRNA-dependent manner. The chain is Valine--tRNA ligase from Vibrio cholerae serotype O1 (strain ATCC 39315 / El Tor Inaba N16961).